A 448-amino-acid chain; its full sequence is Glutamyl-tRNA reductase (448 aa).

Substrate contacts are provided by residues Thr-52–Arg-55, Ser-105, Glu-110–Gln-112, and Gln-116. The active-site Nucleophile is the Cys-53. Residue Gly-184–Gly-189 participates in NADP(+) binding. The segment at Asp-406–Asp-435 is disordered.

It belongs to the glutamyl-tRNA reductase family. In terms of assembly, homodimer.

It carries out the reaction (S)-4-amino-5-oxopentanoate + tRNA(Glu) + NADP(+) = L-glutamyl-tRNA(Glu) + NADPH + H(+). The protein operates within porphyrin-containing compound metabolism; protoporphyrin-IX biosynthesis; 5-aminolevulinate from L-glutamyl-tRNA(Glu): step 1/2. Catalyzes the NADPH-dependent reduction of glutamyl-tRNA(Glu) to glutamate 1-semialdehyde (GSA). The chain is Glutamyl-tRNA reductase from Haloarcula marismortui (strain ATCC 43049 / DSM 3752 / JCM 8966 / VKM B-1809) (Halobacterium marismortui).